Here is a 582-residue protein sequence, read N- to C-terminus: A-type ATP synthase subunit A 1 (582 aa).

231–238 (GPFGSGKT) provides a ligand contact to ATP.

This sequence belongs to the ATPase alpha/beta chains family. As to quaternary structure, has multiple subunits with at least A(3), B(3), C, D, E, F, H, I and proteolipid K(x).

It is found in the cell membrane. It catalyses the reaction ATP + H2O + 4 H(+)(in) = ADP + phosphate + 5 H(+)(out). Functionally, component of the A-type ATP synthase that produces ATP from ADP in the presence of a proton gradient across the membrane. The A chain is the catalytic subunit. This is A-type ATP synthase subunit A 1 from Methanospirillum hungatei JF-1 (strain ATCC 27890 / DSM 864 / NBRC 100397 / JF-1).